A 343-amino-acid chain; its full sequence is Probable potassium channel protein 2 (343 aa).

At 1 to 7 the chain is on the cytoplasmic side; sequence METSKKL. Residues 8 to 28 form a helical membrane-spanning segment; the sequence is VIVAVLSITLILTYAYLISII. At 29–61 the chain is on the extracellular side; the sequence is EGVDYFTALYFSVITITTTGYGDFTPKTFLGRT. The short motif at 46–51 is the Selectivity filter element; the sequence is TTGYGD. The helical transmembrane segment at 62–82 threads the bilayer; that stretch reads LTVVYLCVGVGIVMYLFSLIA. The Cytoplasmic segment spans residues 83 to 343; the sequence is EFIVEGKFEE…NLVKKKKKKL (261 aa). The RCK N-terminal domain occupies 107-227; that stretch reads KDHYIICGYG…KIAGANRVVS (121 aa). Residues 253–338 form the RCK C-terminal domain; the sequence is IKIAKDEYEE…LKYLENLVKK (86 aa).

The protein localises to the cell membrane. In terms of biological role, probable potassium channel protein. The polypeptide is Probable potassium channel protein 2 (Methanocaldococcus jannaschii (strain ATCC 43067 / DSM 2661 / JAL-1 / JCM 10045 / NBRC 100440) (Methanococcus jannaschii)).